The primary structure comprises 197 residues: Peptidoglycan-recognition protein 1 (197 aa).

An N-terminal signal peptide occupies residues 1–23 (MKLATITFFLLTEIFFYISYAEA). 2 disulfide bridges follow: Cys31/Cys154 and Cys68/Cys74. Residues 53–180 (KPLERVVIHH…RNVKATKSPG (128 aa)) form the N-acetylmuramoyl-L-alanine amidase domain.

Belongs to the N-acetylmuramoyl-L-alanine amidase 2 family. In terms of tissue distribution, localizes to plasma (at protein level).

It is found in the secreted. Peptidoglycan-recognition protein probably involved in innate immunity by binding to peptidoglycans (PGN) of bacteria and activating the prophenoloxidase (proPO) cascade immune response. Binds to 1,3-beta-D-glucan and PGN. This chain is Peptidoglycan-recognition protein 1 (PGRP-1), found in Holotrichia diomphalia (Korean black chafer).